Consider the following 100-residue polypeptide: Urease subunit gamma (100 aa).

The protein belongs to the urease gamma subunit family. In terms of assembly, probable heterotrimer of UreA (gamma), UreB (beta) and UreC (alpha) subunits. Three heterotrimers associate to form the active enzyme. The trimeric urease interacts with an accessory complex composed of UreD, UreF and UreG, which is required for the assembly of the nickel containing metallocenter of UreC. The UreE protein may also play a direct role in nickel transfer to the urease apoprotein.

Its subcellular location is the cytoplasm. It carries out the reaction urea + 2 H2O + H(+) = hydrogencarbonate + 2 NH4(+). It participates in nitrogen metabolism; urea degradation; CO(2) and NH(3) from urea (urease route): step 1/1. This is Urease subunit gamma from Proteus mirabilis (strain HI4320).